The primary structure comprises 543 residues: Probable protein kinase UbiB (543 aa).

Residues Asp-123–Leu-501 form the Protein kinase domain. Residues Leu-129–Val-137 and Lys-152 contribute to the ATP site. The active-site Proton acceptor is the Asp-287. Residues Met-517–Ala-537 form a helical membrane-spanning segment.

Belongs to the ABC1 family. UbiB subfamily.

It is found in the cell inner membrane. It participates in cofactor biosynthesis; ubiquinone biosynthesis [regulation]. Functionally, is probably a protein kinase regulator of UbiI activity which is involved in aerobic coenzyme Q (ubiquinone) biosynthesis. This is Probable protein kinase UbiB from Edwardsiella ictaluri (strain 93-146).